Consider the following 469-residue polypeptide: Glutamine synthetase (469 aa).

A GS beta-grasp domain is found at 15 to 96; it reads EDVKFIDVRF…INFFIHDPIT (82 aa). The 366-residue stretch at 104–469 folds into the GS catalytic domain; it reads PRNVAKKAEA…PYEYEQYYDV (366 aa). 2 residues coordinate Mg(2+): E129 and E131. Residue E205 coordinates ATP. Residues E210 and E218 each coordinate Mg(2+). Residue 221–223 participates in ATP binding; the sequence is YKF. Residues 262-263 and G263 each bind L-glutamate; that span reads NG. Residue H267 coordinates Mg(2+). ATP contacts are provided by residues 269–271 and S271; that span reads HQS. Residues R320, E326, and R338 each coordinate L-glutamate. 3 residues coordinate ATP: R338, R343, and K352. E357 is a Mg(2+) binding site. L-glutamate is bound at residue R359. The residue at position 397 (Y397) is an O-AMP-tyrosine.

It belongs to the glutamine synthetase family. Oligomer of 12 subunits arranged in the form of two hexagons. The cofactor is Mg(2+).

It is found in the cytoplasm. The catalysed reaction is L-glutamate + NH4(+) + ATP = L-glutamine + ADP + phosphate + H(+). The activity of this enzyme could be controlled by adenylation under conditions of abundant glutamine. Catalyzes the ATP-dependent biosynthesis of glutamine from glutamate and ammonia. This Streptomyces viridochromogenes protein is Glutamine synthetase.